The primary structure comprises 428 residues: Tyrosine--tRNA ligase (428 aa).

Y41 is an L-tyrosine binding site. Residues P46–H55 carry the 'HIGH' region motif. Positions 179 and 183 each coordinate L-tyrosine. Residues K239–T243 carry the 'KMSKS' region motif. K242 lines the ATP pocket. In terms of domain architecture, S4 RNA-binding spans A361–G418.

Belongs to the class-I aminoacyl-tRNA synthetase family. TyrS type 1 subfamily. As to quaternary structure, homodimer.

Its subcellular location is the cytoplasm. It carries out the reaction tRNA(Tyr) + L-tyrosine + ATP = L-tyrosyl-tRNA(Tyr) + AMP + diphosphate + H(+). Catalyzes the attachment of tyrosine to tRNA(Tyr) in a two-step reaction: tyrosine is first activated by ATP to form Tyr-AMP and then transferred to the acceptor end of tRNA(Tyr). The protein is Tyrosine--tRNA ligase of Citrobacter koseri (strain ATCC BAA-895 / CDC 4225-83 / SGSC4696).